The sequence spans 211 residues: Transcription antitermination protein NusB (211 aa).

It belongs to the NusB family.

Involved in transcription antitermination. Required for transcription of ribosomal RNA (rRNA) genes. Binds specifically to the boxA antiterminator sequence of the ribosomal RNA (rrn) operons. The polypeptide is Transcription antitermination protein NusB (Gloeobacter violaceus (strain ATCC 29082 / PCC 7421)).